Here is a 541-residue protein sequence, read N- to C-terminus: uncharacterized protein (541 aa).

Positions 1–55 (MTKTVTRAGGASGPQQFQSGGETMKYEITRRRFLAASSAVLAAPAIVTMVRPARA) form a signal peptide, tat-type signal. The interval 339–362 (RRSPSGISSPRSNRQPKAEALSAR) is disordered. The segment covering 341 to 351 (SPSGISSPRSN) has biased composition (low complexity). 4 helical membrane passes run 379 to 399 (AIVWFARQVVIFSGIALMVFM), 420 to 440 (LPVLIFPWFILGGIVLAAHSG), 466 to 486 (LVSAGAFLMLGYQAYLVGEIA), and 500 to 520 (VGYFALAVGSVLVAIVTLAVA).

Belongs to the bacterial solute-binding protein 7 family. Post-translationally, predicted to be exported by the Tat system. The position of the signal peptide cleavage has not been experimentally proven.

The protein localises to the cell membrane. This is an uncharacterized protein from Sinorhizobium fredii (strain NBRC 101917 / NGR234).